A 417-amino-acid polypeptide reads, in one-letter code: Prostaglandin E2 receptor EP3 subtype (417 aa).

The Extracellular segment spans residues 1–52; it reads MKATRDHASAPFCTRFNHSDPGIWAAERAVEAPNNLTLPPEPSEDCGSVSVA. N17 and N35 each carry an N-linked (GlcNAc...) asparagine glycan. Residues 53-77 form a helical membrane-spanning segment; sequence FSMTMMITGFVGNALAITLVSKSYR. Residues 78–90 lie on the Cytoplasmic side of the membrane; the sequence is RREGKRKKSFLLC. The helical transmembrane segment at 91-111 threads the bilayer; that stretch reads IGWLALTDMVGQLLTSPVVIV. Residues 112–130 lie on the Extracellular side of the membrane; it reads LYLSHQRWEQLDPSGRLCT. The helical transmembrane segment at 131-152 threads the bilayer; it reads FFGLTMTVFGLSSLFIASAMAV. The Cytoplasmic segment spans residues 153–174; sequence ERALATRAPHWYSSHMKTSVTR. A helical transmembrane segment spans residues 175 to 196; sequence AVLLGVWLAVLAFALLPVLGVG. Residues 197 to 226 lie on the Extracellular side of the membrane; sequence QYTIQWPGTWCFISTGPGGNGTNSRQNWGN. N-linked (GlcNAc...) asparagine glycosylation occurs at N216. A helical membrane pass occupies residues 227–252; it reads VFFASAFAILGLSALVVTFACNLATI. The Cytoplasmic portion of the chain corresponds to 253–282; sequence KALVSRCRAKATASQSSAQWGRITTETAIQ. Residues 283–306 traverse the membrane as a helical segment; it reads LMGIMCVLSVCWSPLLIMMLKMIF. Residue N307 is glycosylated (N-linked (GlcNAc...) asparagine). Residues 307–326 lie on the Extracellular side of the membrane; it reads NHTSVEHCKTYTENQDECNF. Residues 327-348 traverse the membrane as a helical segment; sequence FLIAVRLASLNQILDPWVYLLL. Residues 349-417 are Cytoplasmic-facing; the sequence is RKILLQKFCQ…HIYLHTLEHQ (69 aa).

The protein belongs to the G-protein coupled receptor 1 family. As to quaternary structure, interacts (via C-terminus) with MKLN1.

It localises to the cell membrane. Functionally, receptor for prostaglandin E2 (PGE2). The various isoforms have identical ligand binding properties but interact with different second messenger systems: isoform EP3A couples to G(i)/G(o) proteins; isoform EP3B and isoform EP3C couple to G(s), and isoform EP3D couples to G(i), G(s) and G(p). Required for normal development of fever in response to pyrinogens, including IL1B, prostaglandin E2 and bacterial lipopolysaccharide (LPS). Required for normal potentiation of platelet aggregation by prostaglandin E2, and thus plays a role in the regulation of blood coagulation. Required for increased HCO3(-) secretion in the duodenum in response to mucosal acidification, and thereby contributes to the protection of the mucosa against acid-induced ulceration. Not required for normal kidney function, normal urine volume and osmolality. The sequence is that of Prostaglandin E2 receptor EP3 subtype (PTGER3) from Bos taurus (Bovine).